The sequence spans 161 residues: Cytochrome c-type biogenesis protein CcmE (161 aa).

At 1-8 (MNPRRKKR) the chain is on the cytoplasmic side. A helical; Signal-anchor for type II membrane protein transmembrane segment spans residues 9–29 (LGLILALFVGISATVGLMLYA). Residues 30–161 (LNQNMDLFYT…TEQQKQGTGQ (132 aa)) are Periplasmic-facing. Heme is bound by residues H129 and Y133. Positions 142-161 (MKKTHEPLQYTEQQKQGTGQ) are disordered. Residues 151 to 161 (YTEQQKQGTGQ) are compositionally biased toward polar residues.

This sequence belongs to the CcmE/CycJ family.

It localises to the cell inner membrane. Heme chaperone required for the biogenesis of c-type cytochromes. Transiently binds heme delivered by CcmC and transfers the heme to apo-cytochromes in a process facilitated by CcmF and CcmH. The chain is Cytochrome c-type biogenesis protein CcmE from Aliivibrio fischeri (strain MJ11) (Vibrio fischeri).